The following is a 190-amino-acid chain: Vascular endothelial growth factor A (190 aa).

The first 26 residues, 1-26 (MNFLLSWVHWTLALLLYLHHAKWSQA), serve as a signal peptide directing secretion. Intrachain disulfides connect Cys-51–Cys-93, Cys-82–Cys-127, and Cys-86–Cys-129. Asn-100 is a glycosylation site (N-linked (GlcNAc...) asparagine).

It belongs to the PDGF/VEGF growth factor family. Homodimer; disulfide-linked. Also found as heterodimer with PGF. Interacts with NRP1. Interacts with isoform 2 of BSG. Interacts with CD82; this interaction inhibits VEGFA-mediated signaling pathway.

Its subcellular location is the secreted. In terms of biological role, growth factor active in angiogenesis, vasculogenesis and endothelial cell growth. Induces endothelial cell proliferation, promotes cell migration, inhibits apoptosis and induces permeabilization of blood vessels. Binds to the FLT1/VEGFR1 and KDR/VEGFR2 receptors, heparan sulfate and heparin. Binding to NRP1 receptor initiates a signaling pathway needed for motor neuron axon guidance and cell body migration, including for the caudal migration of facial motor neurons from rhombomere 4 to rhombomere 6 during embryonic development. Also binds the DEAR/FBXW7-AS1 receptor. This chain is Vascular endothelial growth factor A (VEGFA), found in Mesocricetus auratus (Golden hamster).